We begin with the raw amino-acid sequence, 352 residues long: Holliday junction branch migration complex subunit RuvB (352 aa).

A large ATPase domain (RuvB-L) region spans residues 4–191 (TDKLAAPARV…FGIVARLEFY (188 aa)). ATP-binding positions include L30, R31, G72, K75, T76, T77, 138 to 140 (EDY), R181, Y191, and R228. T76 is a Mg(2+) binding site. Positions 192 to 262 (TADELARIVT…MADAALAMLD (71 aa)) are small ATPAse domain (RuvB-S). Residues 265–352 (SVGFDLMDRK…SGASELFGDA (88 aa)) are head domain (RuvB-H). DNA-binding residues include R301, R320, and R325.

It belongs to the RuvB family. As to quaternary structure, homohexamer. Forms an RuvA(8)-RuvB(12)-Holliday junction (HJ) complex. HJ DNA is sandwiched between 2 RuvA tetramers; dsDNA enters through RuvA and exits via RuvB. An RuvB hexamer assembles on each DNA strand where it exits the tetramer. Each RuvB hexamer is contacted by two RuvA subunits (via domain III) on 2 adjacent RuvB subunits; this complex drives branch migration. In the full resolvosome a probable DNA-RuvA(4)-RuvB(12)-RuvC(2) complex forms which resolves the HJ.

Its subcellular location is the cytoplasm. The enzyme catalyses ATP + H2O = ADP + phosphate + H(+). The RuvA-RuvB-RuvC complex processes Holliday junction (HJ) DNA during genetic recombination and DNA repair, while the RuvA-RuvB complex plays an important role in the rescue of blocked DNA replication forks via replication fork reversal (RFR). RuvA specifically binds to HJ cruciform DNA, conferring on it an open structure. The RuvB hexamer acts as an ATP-dependent pump, pulling dsDNA into and through the RuvAB complex. RuvB forms 2 homohexamers on either side of HJ DNA bound by 1 or 2 RuvA tetramers; 4 subunits per hexamer contact DNA at a time. Coordinated motions by a converter formed by DNA-disengaged RuvB subunits stimulates ATP hydrolysis and nucleotide exchange. Immobilization of the converter enables RuvB to convert the ATP-contained energy into a lever motion, pulling 2 nucleotides of DNA out of the RuvA tetramer per ATP hydrolyzed, thus driving DNA branch migration. The RuvB motors rotate together with the DNA substrate, which together with the progressing nucleotide cycle form the mechanistic basis for DNA recombination by continuous HJ branch migration. Branch migration allows RuvC to scan DNA until it finds its consensus sequence, where it cleaves and resolves cruciform DNA. The polypeptide is Holliday junction branch migration complex subunit RuvB (Cupriavidus necator (strain ATCC 17699 / DSM 428 / KCTC 22496 / NCIMB 10442 / H16 / Stanier 337) (Ralstonia eutropha)).